A 593-amino-acid polypeptide reads, in one-letter code: Autophagy-related protein 22-2 (593 aa).

Residues 42-62 (YGVAAEVFAVCGVGSFLPLTL) traverse the membrane as a helical segment. Residue Asn-90 is glycosylated (N-linked (GlcNAc...) asparagine). 3 helical membrane-spanning segments follow: residues 112-132 (SFAM…LVSF), 159-179 (LFML…VIGV), and 181-201 (CLGS…ANDP). The interval 228–261 (SWTDEEDTGDHAGPAGSKKAVEPEKASSSTSPEL) is disordered. 4 helical membrane-spanning segments follow: residues 271 to 291 (GVGL…LLLF), 305 to 325 (LPLR…TVVC), 377 to 397 (VVVF…VSGT), and 415 to 435 (LLSI…PIVA). Asn-443 is a glycosylation site (N-linked (GlcNAc...) asparagine). The next 4 helical transmembrane spans lie at 448-468 (LCIA…IPFI), 480-500 (WEIF…ASYC), 525-545 (KGSS…TGSV), and 548-568 (GFIF…LVNA).

The protein belongs to the ATG22 family.

The protein localises to the vacuole membrane. In terms of biological role, vacuolar effluxer which mediate the efflux of amino acids resulting from autophagic degradation. The release of autophagic amino acids allows the maintenance of protein synthesis and viability during nitrogen starvation. In Emericella nidulans (strain FGSC A4 / ATCC 38163 / CBS 112.46 / NRRL 194 / M139) (Aspergillus nidulans), this protein is Autophagy-related protein 22-2 (atg22-2).